The primary structure comprises 665 residues: MQNSHMEEYRNSDNGSTGNSSEVAVVEHPDFSTEIMNVTEMEQSPDASPSAHASTEENEMANAVNLPVTEAEGDFPPEFEKFWKTVEMNPQDFTGWVYLLQYVEQENHLMAARKAFDKFFVHYPYCYGYWKKYADLEKRHDNIKQSDEVYRRGLQAIPLSVDLWIHYINFLKETLEPGDQETNTTIRGTFEHAVLAAGTDFRSDKLWEMYINWENEQGNLREVTAVYDRILGIPTQLYSHHFQRFKEHVQNNLPRDLLTGEQFIQLRRELASVNGHSGDDGPPGDDLPSGIEDISPAKLITEIENMRHRIIEIHQEMFNYNEHEVSKRWTFEEGIKRPYFHVKPLEKAQPKKNWKEYLEFEIENGTHERVVVLFERCVISCALYEEFWIKYAKYMENHSIEGVRHVFSRACTVHLPKKPMAHMLWAAFEEQQGNINEARIILRTFEECVLGLAMVRLRRVSLERRHGNMEEAEHLLQDAIKNAKSNNESSFYAIKLARHLFKIQKNLPKSRKVLLEAIEKDKENTKLYLNLLEMEYSCDLKQNEENILNCFDKAIHGSLPIKMRITFSQRKVEFLEDFGSDVNKLLNAYDEHQTLLKEQDTLKRKAENGSEEPEEKKAHTEDLSSAQIIDGDLQANQAAYNYSAWYQYNYQNPWNYGQYYPPPPT.

Over residues 1-11 (MQNSHMEEYRN) the composition is skewed to basic and acidic residues. The segment at 1-28 (MQNSHMEEYRNSDNGSTGNSSEVAVVEH) is disordered. Over residues 12–22 (SDNGSTGNSSE) the composition is skewed to polar residues. Phosphoserine is present on serine 44. HAT repeat units lie at residues 107–139 (NHLM…LEKR), 141–173 (DNIK…FLKE), 181–216 (ETNT…WENE), 218–251 (GNLR…HVQN), 331–363 (FEEG…FEIE), 365–397 (GTHE…YMEN), and 402–434 (GVRH…QQGN). The span at 599–622 (QDTLKRKAENGSEEPEEKKAHTED) shows a compositional bias: basic and acidic residues. The segment at 599-625 (QDTLKRKAENGSEEPEEKKAHTEDLSS) is disordered.

It belongs to the PRP39 family.

The protein resides in the nucleus. Its function is as follows. Involved in pre-mRNA splicing. The protein is Pre-mRNA-processing factor 39 (Prpf39) of Mus musculus (Mouse).